The sequence spans 282 residues: NADPH-dependent 7-cyano-7-deazaguanine reductase (282 aa).

88-90 provides a ligand contact to substrate; that stretch reads IES. Residue 90-91 coordinates NADPH; that stretch reads SK. The active-site Thioimide intermediate is the C190. D197 functions as the Proton donor in the catalytic mechanism. Substrate is bound at residue 229–230; it reads HE. Position 258–259 (258–259) interacts with NADPH; it reads RG.

This sequence belongs to the GTP cyclohydrolase I family. QueF type 2 subfamily. Homodimer.

It localises to the cytoplasm. The catalysed reaction is 7-aminomethyl-7-carbaguanine + 2 NADP(+) = 7-cyano-7-deazaguanine + 2 NADPH + 3 H(+). Its pathway is tRNA modification; tRNA-queuosine biosynthesis. Catalyzes the NADPH-dependent reduction of 7-cyano-7-deazaguanine (preQ0) to 7-aminomethyl-7-deazaguanine (preQ1). This is NADPH-dependent 7-cyano-7-deazaguanine reductase from Escherichia coli O139:H28 (strain E24377A / ETEC).